Consider the following 445-residue polypeptide: E3 ubiquitin-protein ligase MYLIP (445 aa).

In terms of domain architecture, FERM spans 1–279 (MLCYVTRPDA…ETHAFYRCDT (279 aa)). Positions 341–363 (RNDQSPPSSPLKSSDSSMSCSSC) are disordered. Residues 350 to 363 (PLKSSDSSMSCSSC) show a composition bias toward low complexity. Positions 360, 363, and 368 each coordinate Fe cation. The RING-type zinc-finger motif lies at 387 to 422 (CMVCCEEEINSTFCPCGHTVCCESCAAQLQSCPVCR). Residues 431–433 (VYL) form a critical for homodimerization region.

Homodimer. Interacts with the E2 ubiquitin-conjugating enzyme, UBE2D1 (via RING-type zinc finger). Interacts with myosin regulatory light chain (MRLC) and TMEM4. Autoubiquitinated. In terms of tissue distribution, expressed in developing and adult brain, hippocampus, cerebellum, cerebral cortex, thalamus and substantia nigra. Predominantly found in neurons.

The protein localises to the cytoplasm. Its subcellular location is the cell membrane. The enzyme catalyses S-ubiquitinyl-[E2 ubiquitin-conjugating enzyme]-L-cysteine + [acceptor protein]-L-lysine = [E2 ubiquitin-conjugating enzyme]-L-cysteine + N(6)-ubiquitinyl-[acceptor protein]-L-lysine.. Its pathway is protein modification; protein ubiquitination. Can bind 1 iron ion per dimer. Iron binding seems to decrease LDLR degradation activity. Functionally, E3 ubiquitin-protein ligase that mediates ubiquitination and subsequent proteasomal degradation of myosin regulatory light chain (MRLC), LDLR, VLDLR and LRP8. Activity depends on E2 enzymes of the UBE2D family. Proteasomal degradation of MRLC leads to inhibit neurite outgrowth in presence of NGF by counteracting the stabilization of MRLC by saposin-like protein (CNPY2/MSAP) and reducing CNPY2-stimulated neurite outgrowth. Acts as a sterol-dependent inhibitor of cellular cholesterol uptake by mediating ubiquitination and subsequent degradation of LDLR. This chain is E3 ubiquitin-protein ligase MYLIP (Mylip), found in Rattus norvegicus (Rat).